Here is a 547-residue protein sequence, read N- to C-terminus: NXPE family member 1 (547 aa).

Residues 1–21 (MSSNTMLQKTLLILISFSVVT) form the signal peptide. Residues N39 and N211 are each glycosylated (N-linked (GlcNAc...) asparagine).

It belongs to the NXPE family.

The protein localises to the secreted. In Homo sapiens (Human), this protein is NXPE family member 1 (NXPE1).